A 274-amino-acid chain; its full sequence is PTS system sorbose-specific EIID component (274 aa).

One can recognise a PTS EIID domain in the interval 4–273; it reads KKITQGDLVS…GIIGNALGFL (270 aa). Helical transmembrane passes span 61–81, 99–119, 126–146, 186–206, 226–246, and 253–273; these read LVFF…TAAM, IKVG…WGTL, LGAS…FFIF, ILGL…NVPL, ILDQ…MVRL, and PVWL…LGFL.

The protein resides in the cell inner membrane. In terms of biological role, the phosphoenolpyruvate-dependent sugar phosphotransferase system (PTS), a major carbohydrate active transport system, catalyzes the phosphorylation of incoming sugar substrates concomitant with their translocation across the cell membrane. The enzyme II SorABFM PTS system is involved in sorbose transport. This is PTS system sorbose-specific EIID component from Klebsiella pneumoniae.